Reading from the N-terminus, the 298-residue chain is Cyanophycinase (298 aa).

Catalysis depends on charge relay system residues serine 155, glutamate 173, and histidine 197.

It belongs to the peptidase S51 family.

It carries out the reaction [L-4-(L-arginin-2-N-yl)aspartate](n) + H2O = [L-4-(L-arginin-2-N-yl)aspartate](n-1) + L-4-(L-arginin-2-N-yl)aspartate. In terms of biological role, exopeptidase that catalyzes the hydrolytic cleavage of multi-L-arginyl-poly-L-aspartic acid (cyanophycin; a water-insoluble reserve polymer) into aspartate-arginine dipeptides. The protein is Cyanophycinase (cphB) of Trichormus variabilis (strain ATCC 29413 / PCC 7937) (Anabaena variabilis).